Here is a 148-residue protein sequence, read N- to C-terminus: SsrA-binding protein (148 aa).

This sequence belongs to the SmpB family.

It localises to the cytoplasm. Functionally, required for rescue of stalled ribosomes mediated by trans-translation. Binds to transfer-messenger RNA (tmRNA), required for stable association of tmRNA with ribosomes. tmRNA and SmpB together mimic tRNA shape, replacing the anticodon stem-loop with SmpB. tmRNA is encoded by the ssrA gene; the 2 termini fold to resemble tRNA(Ala) and it encodes a 'tag peptide', a short internal open reading frame. During trans-translation Ala-aminoacylated tmRNA acts like a tRNA, entering the A-site of stalled ribosomes, displacing the stalled mRNA. The ribosome then switches to translate the ORF on the tmRNA; the nascent peptide is terminated with the 'tag peptide' encoded by the tmRNA and targeted for degradation. The ribosome is freed to recommence translation, which seems to be the essential function of trans-translation. This is SsrA-binding protein from Pseudothermotoga lettingae (strain ATCC BAA-301 / DSM 14385 / NBRC 107922 / TMO) (Thermotoga lettingae).